Here is a 100-residue protein sequence, read N- to C-terminus: Small ribosomal subunit protein uS14 (100 aa).

Belongs to the universal ribosomal protein uS14 family. Part of the 30S ribosomal subunit. Contacts proteins S3 and S10.

Its function is as follows. Binds 16S rRNA, required for the assembly of 30S particles and may also be responsible for determining the conformation of the 16S rRNA at the A site. The chain is Small ribosomal subunit protein uS14 from Synechococcus sp. (strain CC9605).